The sequence spans 110 residues: Acid stress chaperone HdeA (110 aa).

The N-terminal stretch at 1–21 (MKKVLGVILGGLLLLPVVSNA) is a signal peptide. Cys39 and Cys87 are disulfide-bonded.

It belongs to the HdeA family.

Its subcellular location is the periplasm. Functionally, required for optimal acid stress protection. Exhibits a chaperone-like activity only at low pH by suppressing non-specifically the aggregation of denaturated periplasmic proteins. The polypeptide is Acid stress chaperone HdeA (Escherichia coli O157:H7).